A 135-amino-acid chain; its full sequence is Small ribosomal subunit protein uS12 (135 aa).

At aspartate 89 the chain carries 3-methylthioaspartic acid. The disordered stretch occupies residues 108–135; that stretch reads NKRTVSRSKYGTKKAKATDKKATDSKKK. The segment covering 111-122 has biased composition (basic residues); it reads TVSRSKYGTKKA. The span at 123-135 shows a compositional bias: basic and acidic residues; that stretch reads KATDKKATDSKKK.

This sequence belongs to the universal ribosomal protein uS12 family. Part of the 30S ribosomal subunit. Contacts proteins S8 and S17. May interact with IF1 in the 30S initiation complex.

Its function is as follows. With S4 and S5 plays an important role in translational accuracy. In terms of biological role, interacts with and stabilizes bases of the 16S rRNA that are involved in tRNA selection in the A site and with the mRNA backbone. Located at the interface of the 30S and 50S subunits, it traverses the body of the 30S subunit contacting proteins on the other side and probably holding the rRNA structure together. The combined cluster of proteins S8, S12 and S17 appears to hold together the shoulder and platform of the 30S subunit. This chain is Small ribosomal subunit protein uS12, found in Helicobacter pylori (strain HPAG1).